The sequence spans 309 residues: tRNA pseudouridine synthase B (309 aa).

The Nucleophile role is filled by aspartate 39.

This sequence belongs to the pseudouridine synthase TruB family. Type 1 subfamily.

It carries out the reaction uridine(55) in tRNA = pseudouridine(55) in tRNA. In terms of biological role, responsible for synthesis of pseudouridine from uracil-55 in the psi GC loop of transfer RNAs. The protein is tRNA pseudouridine synthase B of Bacillus licheniformis (strain ATCC 14580 / DSM 13 / JCM 2505 / CCUG 7422 / NBRC 12200 / NCIMB 9375 / NCTC 10341 / NRRL NRS-1264 / Gibson 46).